The primary structure comprises 160 residues: uncharacterized protein (160 aa).

The 133-residue stretch at 20–152 (EREIWVLYMK…VYEGLSILSR (133 aa)) folds into the HTH marR-type domain. The segment at residues 66-89 (VSDIAEKMGASLSNTTGLLDRLEK) is a DNA-binding region (H-T-H motif).

This is an uncharacterized protein from Bacillus subtilis (strain 168).